We begin with the raw amino-acid sequence, 182 residues long: uncharacterized protein (182 aa).

The Macro domain occupies 1–170 (MIVKIIKGDI…IFVNIFEREL (170 aa)).

This is an uncharacterized protein from Sulfurisphaera tokodaii (strain DSM 16993 / JCM 10545 / NBRC 100140 / 7) (Sulfolobus tokodaii).